The primary structure comprises 397 residues: uncharacterized protein (397 aa).

4 consecutive transmembrane segments (helical) span residues 255-275 (LLTY…ICYA), 284-304 (MITF…VLLA), 308-328 (LITA…PLPL), and 370-390 (VLLV…YCLG).

It is found in the cell membrane. This is an uncharacterized protein from Methanocaldococcus jannaschii (strain ATCC 43067 / DSM 2661 / JAL-1 / JCM 10045 / NBRC 100440) (Methanococcus jannaschii).